The following is a 384-amino-acid chain: GDP-mannose transporter (384 aa).

The Cytoplasmic segment spans residues 1-40 (MVEDKKTDDYTIEMDKMDQGSKNFEAAAPPPQPRTPPAGS). The helical transmembrane segment at 41-61 (ISNNPILPVLAYCGSSILMTV) threads the bilayer. At 62-69 (MNKYVLSG) the chain is on the lumenal side. Residues 70-90 (LDFNLNFFLLCVQSIVCIVAI) traverse the membrane as a helical segment. The Cytoplasmic portion of the chain corresponds to 91-110 (QTCKSCGLITYRDFSADEAR). A helical transmembrane segment spans residues 111 to 127 (KWFPITLLLIGMIYTGS). Residues 128–134 (KALQFLS) are Lumenal-facing. Residues 135–151 (IPVYTIFKNLTIILIAY) form a helical membrane-spanning segment. The Cytoplasmic segment spans residues 152–160 (GEVLWFGGS). A helical transmembrane segment spans residues 161–182 (VTGLTLFSFGLMVLSSIIAAWA). Residues 183-200 (DIKHAVESTGDATAKVST) are Lumenal-facing. A helical transmembrane segment spans residues 201–221 (LNAGYIWMLVNCLCTSSYVLG). At 222-236 (MRKRIKLTNFKDFDT) the chain is on the cytoplasmic side. A helical membrane pass occupies residues 237-257 (LAMFYNNLLSIPVLIVLTGLM). Topologically, residues 258–276 (EDWSSANITRNFPPADRNN) are lumenal. Asn264 carries an N-linked (GlcNAc...) asparagine glycan. The chain crosses the membrane as a helical span at residues 277–297 (IIFAMILSGLSSVFISYTSAW). The Cytoplasmic portion of the chain corresponds to 298–305 (CVRVTSST). The chain crosses the membrane as a helical span at residues 306 to 326 (TYSMVGALNKLPIALSGLIFF). Over 327–329 (DAP) the chain is Lumenal. Residues 330–350 (VTFPSVSAIVVGFVSGIVYAV) form a helical membrane-spanning segment. Topologically, residues 351–384 (AKIKQNAKPKTGVLPMSNPPVSASSQSMRDSLRS) are cytoplasmic. A disordered region spans residues 364-384 (LPMSNPPVSASSQSMRDSLRS). Residues 369–384 (PPVSASSQSMRDSLRS) are compositionally biased toward polar residues.

Belongs to the TPT transporter family. SLC35D subfamily. As to quaternary structure, homooligomer.

The protein localises to the golgi apparatus membrane. It localises to the cytoplasmic vesicle membrane. It is found in the endoplasmic reticulum membrane. In terms of biological role, involved in the import of GDP-mannose from the cytoplasm into the Golgi lumen. The polypeptide is GDP-mannose transporter (gmt1) (Aspergillus terreus (strain NIH 2624 / FGSC A1156)).